The chain runs to 211 residues: Proteasome subunit beta (211 aa).

Residues 1–9 (MDNDKYLKG) constitute a propeptide, removed in mature form; by autocatalysis. Catalysis depends on T10, which acts as the Nucleophile.

It belongs to the peptidase T1B family. The 20S proteasome core is composed of 14 alpha and 14 beta subunits that assemble into four stacked heptameric rings, resulting in a barrel-shaped structure. The two inner rings, each composed of seven catalytic beta subunits, are sandwiched by two outer rings, each composed of seven alpha subunits. The catalytic chamber with the active sites is on the inside of the barrel. Has a gated structure, the ends of the cylinder being occluded by the N-termini of the alpha-subunits. Is capped at one or both ends by the proteasome regulatory ATPase, PAN.

It is found in the cytoplasm. The enzyme catalyses Cleavage of peptide bonds with very broad specificity.. With respect to regulation, the formation of the proteasomal ATPase PAN-20S proteasome complex, via the docking of the C-termini of PAN into the intersubunit pockets in the alpha-rings, triggers opening of the gate for substrate entry. Interconversion between the open-gate and close-gate conformations leads to a dynamic regulation of the 20S proteasome proteolysis activity. Functionally, component of the proteasome core, a large protease complex with broad specificity involved in protein degradation. This Methanosarcina barkeri (strain Fusaro / DSM 804) protein is Proteasome subunit beta.